A 203-amino-acid chain; its full sequence is Lectin (203 aa).

The signal sequence occupies residues 1–20 (MINILHVIAGLALASVGVDA). A propeptide spanning residues 21–53 (RQVGVGADVLHAVENTIDSITGVEASHSALEVG) is cleaved from the precursor.

Monomer.

Functionally, N-acetyl-D-glucosamine-specific lectin. Specifically agglutinates rabbit erythrocytes. The chain is Lectin (UPL1) from Ulva pertusa (Sea lettuce).